A 497-amino-acid polypeptide reads, in one-letter code: Glycerol kinase (497 aa).

T11 contributes to the ADP binding site. 3 residues coordinate ATP: T11, S12, and S13. Residue T11 participates in sn-glycerol 3-phosphate binding. R15 provides a ligand contact to ADP. Residues R81, E82, Y133, and D242 each coordinate sn-glycerol 3-phosphate. Positions 81, 82, 133, 242, and 243 each coordinate glycerol. 2 residues coordinate ADP: T264 and G307. T264, G307, Q311, and G412 together coordinate ATP. G412 and N416 together coordinate ADP.

It belongs to the FGGY kinase family.

The catalysed reaction is glycerol + ATP = sn-glycerol 3-phosphate + ADP + H(+). It participates in polyol metabolism; glycerol degradation via glycerol kinase pathway; sn-glycerol 3-phosphate from glycerol: step 1/1. With respect to regulation, inhibited by fructose 1,6-bisphosphate (FBP). Its function is as follows. Key enzyme in the regulation of glycerol uptake and metabolism. Catalyzes the phosphorylation of glycerol to yield sn-glycerol 3-phosphate. The polypeptide is Glycerol kinase (Polaromonas naphthalenivorans (strain CJ2)).